Consider the following 609-residue polypeptide: Numb-like protein (609 aa).

Disordered stretches follow at residues 1-68 (MSRS…QWQA), 223-283 (GSFR…PVAA), 372-421 (ASAG…EEVS), 434-464 (QQQQ…QPFP), and 537-609 (AGAF…EIEL). Pro residues predominate over residues 19–29 (PPAPCGAPGPP). One can recognise a PID domain in the interval 74–223 (RKGTCSFPVR…ASRTSFAREG (150 aa)). Phosphoserine is present on residues Ser-224 and Ser-228. Over residues 233–245 (PAEREAPDKKKAE) the composition is skewed to basic and acidic residues. Positions 246 to 259 (AAAAPTVAPGPAQP) are enriched in low complexity. Position 263 is a phosphoserine (Ser-263). A Phosphothreonine modification is found at Thr-279. Positions 409 to 418 (TPSEAERWLE) are enriched in basic and acidic residues. The residue at position 411 (Ser-411) is a Phosphoserine. A compositionally biased stretch (low complexity) spans 434–446 (QQQQQQQQQQQQQ). 2 stretches are compositionally biased toward pro residues: residues 454 to 464 (PTMPPALQPFP) and 558 to 573 (NGAP…PAPE).

Interacts (via PTB domain) with MAP3K7IP2 (via C-terminal). Interacts (via C-terminal) with TRAF6 (via TRAF domains). Associates with EPS15 and NOTCH1.

It localises to the cytoplasm. Functionally, plays a role in the process of neurogenesis. Required throughout embryonic neurogenesis to maintain neural progenitor cells, also called radial glial cells (RGCs), by allowing their daughter cells to choose progenitor over neuronal cell fate. Not required for the proliferation of neural progenitor cells before the onset of embryonic neurogenesis. Also required postnatally in the subventricular zone (SVZ) neurogenesis by regulating SVZ neuroblasts survival and ependymal wall integrity. Negative regulator of NF-kappa-B signaling pathway. The inhibition of NF-kappa-B activation is mediated at least in part, by preventing MAP3K7IP2 to interact with polyubiquitin chains of TRAF6 and RIPK1 and by stimulating the 'Lys-48'-linked polyubiquitination and degradation of TRAF6 in cortical neurons. This is Numb-like protein (NUMBL) from Homo sapiens (Human).